The chain runs to 213 residues: Thiamine-phosphate synthase (213 aa).

Residues 40 to 44 (QFREK) and Asn-75 each bind 4-amino-2-methyl-5-(diphosphooxymethyl)pyrimidine. Mg(2+)-binding residues include Asp-76 and Asp-95. Ser-113 lines the 4-amino-2-methyl-5-(diphosphooxymethyl)pyrimidine pocket. 139–141 (TPS) contacts 2-[(2R,5Z)-2-carboxy-4-methylthiazol-5(2H)-ylidene]ethyl phosphate. 4-amino-2-methyl-5-(diphosphooxymethyl)pyrimidine is bound at residue Lys-142. 2-[(2R,5Z)-2-carboxy-4-methylthiazol-5(2H)-ylidene]ethyl phosphate-binding positions include Gly-171 and 191 to 192 (IS).

The protein belongs to the thiamine-phosphate synthase family. It depends on Mg(2+) as a cofactor.

It carries out the reaction 2-[(2R,5Z)-2-carboxy-4-methylthiazol-5(2H)-ylidene]ethyl phosphate + 4-amino-2-methyl-5-(diphosphooxymethyl)pyrimidine + 2 H(+) = thiamine phosphate + CO2 + diphosphate. The catalysed reaction is 2-(2-carboxy-4-methylthiazol-5-yl)ethyl phosphate + 4-amino-2-methyl-5-(diphosphooxymethyl)pyrimidine + 2 H(+) = thiamine phosphate + CO2 + diphosphate. It catalyses the reaction 4-methyl-5-(2-phosphooxyethyl)-thiazole + 4-amino-2-methyl-5-(diphosphooxymethyl)pyrimidine + H(+) = thiamine phosphate + diphosphate. The protein operates within cofactor biosynthesis; thiamine diphosphate biosynthesis; thiamine phosphate from 4-amino-2-methyl-5-diphosphomethylpyrimidine and 4-methyl-5-(2-phosphoethyl)-thiazole: step 1/1. In terms of biological role, condenses 4-methyl-5-(beta-hydroxyethyl)thiazole monophosphate (THZ-P) and 2-methyl-4-amino-5-hydroxymethyl pyrimidine pyrophosphate (HMP-PP) to form thiamine monophosphate (TMP). This chain is Thiamine-phosphate synthase, found in Staphylococcus aureus (strain MRSA252).